The sequence spans 460 residues: MSGINSRNQKMEQQRQLMEAYIRQKRASPGMVQASDLQINRPMSGMRSNSRELHAYDGPMQFISSPQNPDQILTNGSPGGINPVAMNTSRNHSNNMRSLSTINQEADLIEEISSHELEDEESSPVTVIEQHQQSASHSANSTQSQKPRARQHSFSDNLDEDDYTNRNVAGAAPVRPAGMASSPYKDATLDGSSNGTGNGTGGESEGDVIGNIDQFVMQPAPQGVLYKCRITRDRKGMDRGLFPIYYLHLERDYGKKIFLLGGRKRKKSKTSNYIVSCDPTDLSRNADGFCGKLRSNVFGTSFTVFDNGNKESTESPRLDLAVIIYDTNILGFKGPRNMTVILPGMTEDDQRVKISSADPKQQGILDLWKMKNMDNIVELHNKTPVWNDETQSYVLNFHGRVTQASVKNFQLVHDSDPEYIVMQFGRTSEDVFTMDYRYPLCAMQAFAIALSSFDGKIACE.

2 disordered regions span residues 75 to 97 and 115 to 208; these read NGSP…NNMR and HELE…EGDV. Over residues 85-97 the composition is skewed to polar residues; that stretch reads AMNTSRNHSNNMR. Over residues 130 to 145 the composition is skewed to low complexity; the sequence is QHQQSASHSANSTQSQ. Ser-153 carries the phosphoserine modification. The segment covering 194–203 has biased composition (gly residues); sequence NGTGNGTGGE.

The protein belongs to the TUB family. In terms of tissue distribution, detected in sensory neurons which have a ciliary structure such as the chordotonal neurons, Orco-expressing olfactory receptor neurons, labellar gustatory receptor neurons and in the femoral chordotonal organ (at protein level). In the chordotonal neurons of the Johnston's organ expressed in the proximal to distal cilia, with lower levels of expression in the distal portion (at protein level). Also detected in the salivary glands and antenna (at protein level). Expressed in photoreceptor cells (at protein level). At stage 9 expression is detected in a subset of neuroblasts. By stage 12 expression is found in both the CNS and PNS. In late-stage embryos, expression persists in the CNS and PNS with more abundant expression in the antennal-maxillary sensory neurons and in bilateral groups of cells in the brain.

It is found in the cytoplasm. It localises to the nucleus. The protein resides in the cell projection. Its subcellular location is the cilium membrane. The protein localises to the rhabdomere. Functionally, functions in regulating protein trafficking, retinal maintenance and lipid storage. Protects photoreceptor cells R1 to R6 against light-induced retinal degeneration by stimulating norpA-mediated endocytosis of the rhodopsin ninaE (Rh1). In the auditory receptor neurons, functions as a cilia trafficking regulator of various transient receptor potential (TRP) channel components including iav and nompC. Likely to deliver pre-ciliary vesicles containing membrane proteins such as iav and nompC to the intraflagellar transport complex (IFT) at the cilia base. Plays a role in the inhibition of fat storage. The protein is Protein king tubby (ktub) of Drosophila melanogaster (Fruit fly).